Reading from the N-terminus, the 162-residue chain is 2-C-methyl-D-erythritol 2,4-cyclodiphosphate synthase (162 aa).

2 residues coordinate a divalent metal cation: Asp-8 and His-10. 4-CDP-2-C-methyl-D-erythritol 2-phosphate-binding positions include 8–10 and 36–37; these read DVH and HS. His-44 is a binding site for a divalent metal cation. 4-CDP-2-C-methyl-D-erythritol 2-phosphate is bound by residues 58–60, 63–67, 102–108, 134–137, Phe-141, and Arg-144; these read DIG, FPDTD, AQAPKMA, and TTTE.

Belongs to the IspF family. As to quaternary structure, homotrimer. It depends on a divalent metal cation as a cofactor.

It catalyses the reaction 4-CDP-2-C-methyl-D-erythritol 2-phosphate = 2-C-methyl-D-erythritol 2,4-cyclic diphosphate + CMP. It functions in the pathway isoprenoid biosynthesis; isopentenyl diphosphate biosynthesis via DXP pathway; isopentenyl diphosphate from 1-deoxy-D-xylulose 5-phosphate: step 4/6. Its function is as follows. Involved in the biosynthesis of isopentenyl diphosphate (IPP) and dimethylallyl diphosphate (DMAPP), two major building blocks of isoprenoid compounds. Catalyzes the conversion of 4-diphosphocytidyl-2-C-methyl-D-erythritol 2-phosphate (CDP-ME2P) to 2-C-methyl-D-erythritol 2,4-cyclodiphosphate (ME-CPP) with a corresponding release of cytidine 5-monophosphate (CMP). The chain is 2-C-methyl-D-erythritol 2,4-cyclodiphosphate synthase from Yersinia enterocolitica serotype O:8 / biotype 1B (strain NCTC 13174 / 8081).